A 150-amino-acid polypeptide reads, in one-letter code: Propanediol utilization protein PduV (150 aa).

The targets protein to the BMC stretch occupies residues 1–42 (MKRIMLIGPSQCGKTSLTQCMRGEALHYQKTQAIVWSPTTID). 8–15 (GPSQCGKT) is a GTP binding site.

It belongs to the EutP/PduV family. As to quaternary structure, interacts with PduU, probably via the PduU beta-barrel which is predicted by modeling to be on the exterior of the BMC.

The protein resides in the bacterial microcompartment. It participates in polyol metabolism; 1,2-propanediol degradation. In terms of biological role, may play a role in the spatial distribution of the bacterial microcompartment (BMC) dedicated to 1,2-PD degradation, perhaps being involved in cytoskeleton dynamics; might bind GTP. This subunit is directly targeted to the BMC. Functionally, expression of a cosmid containing the full 21-gene pdu operon in E.coli allows E.coli to grow on 1,2-propanediol (1,2-PD) with the appearance of bacterial microcompartments (BMC) in its cytoplasm. The 1,2-PD-specific bacterial microcompartment (BMC) concentrates low levels of 1,2-PD catabolic enzymes, concentrates volatile reaction intermediates thus enhancing pathway flux and keeps the level of toxic, mutagenic propionaldehyde low. This is Propanediol utilization protein PduV from Citrobacter freundii.